A 222-amino-acid polypeptide reads, in one-letter code: Probable GTP-binding protein EngB (222 aa).

The EngB-type G domain maps to 25–199 (AGVEVAFAGR…SQLLQNWFDT (175 aa)). GTP contacts are provided by residues 33–40 (GRSNAGKS), 60–64 (GRTQH), 78–81 (DLPG), 145–148 (TKAD), and 178–180 (FSS). Residues S40 and T62 each coordinate Mg(2+).

Belongs to the TRAFAC class TrmE-Era-EngA-EngB-Septin-like GTPase superfamily. EngB GTPase family. Requires Mg(2+) as cofactor.

Its function is as follows. Necessary for normal cell division and for the maintenance of normal septation. This chain is Probable GTP-binding protein EngB, found in Nitrosomonas europaea (strain ATCC 19718 / CIP 103999 / KCTC 2705 / NBRC 14298).